The primary structure comprises 370 residues: Protein STRICTOSIDINE SYNTHASE-LIKE 4 (370 aa).

The signal sequence occupies residues 1 to 21 (MVLFFSTRFLFFSIFFPCLIS). Asn-101 carries N-linked (GlcNAc...) asparagine glycosylation. Tyr-303 is subject to Phosphotyrosine.

The protein belongs to the strictosidine synthase family.

It is found in the vacuole. The polypeptide is Protein STRICTOSIDINE SYNTHASE-LIKE 4 (Arabidopsis thaliana (Mouse-ear cress)).